The primary structure comprises 384 residues: Dual-specificity RNA methyltransferase RlmN (384 aa).

The active-site Proton acceptor is the Glu93. The 241-residue stretch at 99-339 folds into the Radical SAM core domain; sequence EETRGTLCVS…TTIRKTRGDD (241 aa). A disulfide bridge connects residues Cys106 and Cys344. Residues Cys113, Cys117, and Cys120 each contribute to the [4Fe-4S] cluster site. S-adenosyl-L-methionine contacts are provided by residues 170–171, Ser202, 224–226, and Asn301; these read GE and SLH. Residue Cys344 is the S-methylcysteine intermediate of the active site.

The protein belongs to the radical SAM superfamily. RlmN family. [4Fe-4S] cluster is required as a cofactor.

The protein resides in the cytoplasm. The catalysed reaction is adenosine(2503) in 23S rRNA + 2 reduced [2Fe-2S]-[ferredoxin] + 2 S-adenosyl-L-methionine = 2-methyladenosine(2503) in 23S rRNA + 5'-deoxyadenosine + L-methionine + 2 oxidized [2Fe-2S]-[ferredoxin] + S-adenosyl-L-homocysteine. It carries out the reaction adenosine(37) in tRNA + 2 reduced [2Fe-2S]-[ferredoxin] + 2 S-adenosyl-L-methionine = 2-methyladenosine(37) in tRNA + 5'-deoxyadenosine + L-methionine + 2 oxidized [2Fe-2S]-[ferredoxin] + S-adenosyl-L-homocysteine. Functionally, specifically methylates position 2 of adenine 2503 in 23S rRNA and position 2 of adenine 37 in tRNAs. m2A2503 modification seems to play a crucial role in the proofreading step occurring at the peptidyl transferase center and thus would serve to optimize ribosomal fidelity. In Cupriavidus necator (strain ATCC 17699 / DSM 428 / KCTC 22496 / NCIMB 10442 / H16 / Stanier 337) (Ralstonia eutropha), this protein is Dual-specificity RNA methyltransferase RlmN.